The primary structure comprises 138 residues: Centromere protein S (138 aa).

Position 1 is an N-acetylmethionine (methionine 1). A disordered region spans residues 110-138; sequence RKAQKKKKSEDGSKNSRQPAEAGVVESEN.

It belongs to the TAF9 family. CENP-S/MHF1 subfamily. In terms of assembly, heterodimer with CENPX, sometimes called MHF; this interaction stabilizes both partners. MHF heterodimers can assemble to form tetrameric structures. MHF also coassemble with CENPT-CENPW heterodimers at centromeres to form the tetrameric CENP-T-W-S-X complex. Forms a discrete complex with FANCM and CENPX, called FANCM-MHF; this interaction, probably mediated by direct binding between CENPS and FANCM, leads to synergistic activation of double-stranded DNA binding and strongly stimulates FANCM-mediated DNA remodeling. Recruited by FANCM to the Fanconi anemia (FA) core complex, which consists of CENPS, CENPX, FANCA, FANCB, FANCC, FANCE, FANCF, FANCG, FANCL, FANCM, FAAP24 and FAAP100. The FA core complex associates with Bloom syndrome (BLM) complex, which consists of at least BLM, DNA topoisomerase 3-alpha (TOP3A), RMI1/BLAP75, RPA1/RPA70 and RPA2/RPA32. The super complex between FA and BLM is called BRAFT. Component of the CENPA-CAD complex, composed of CENPI, CENPK, CENPL, CENPO, CENPP, CENPQ, CENPR and CENPS. The CENPA-CAD complex is probably recruited on centromeres by the CENPA-NAC complex, composed of at least CENPA, CENPC, CENPH, CENPM, CENPN, CENPT and CENPU. In terms of tissue distribution, ubiquitously expressed.

The protein resides in the nucleus. The protein localises to the chromosome. It localises to the centromere. It is found in the kinetochore. Its function is as follows. DNA-binding component of the Fanconi anemia (FA) core complex. Required for the normal activation of the FA pathway, leading to monoubiquitination of the FANCI-FANCD2 complex in response to DNA damage, cellular resistance to DNA cross-linking drugs, and prevention of chromosomal breakage. In complex with CENPX (MHF heterodimer), crucial cofactor for FANCM in both binding and ATP-dependent remodeling of DNA. Stabilizes FANCM. In complex with CENPX and FANCM (but not other FANC proteins), rapidly recruited to blocked forks and promotes gene conversion at blocked replication forks. In complex with CENPT, CENPW and CENPX (CENP-T-W-S-X heterotetramer), involved in the formation of a functional kinetochore outer plate, which is essential for kinetochore-microtubule attachment and faithful mitotic progression. As a component of MHF and CENP-T-W-S-X complexes, binds DNA and bends it to form a nucleosome-like structure. DNA-binding function is fulfilled in the presence of CENPX, with the following preference for DNA substates: Holliday junction &gt; double-stranded &gt; splay arm &gt; single-stranded. Does not bind DNA on its own. The protein is Centromere protein S (CENPS) of Homo sapiens (Human).